We begin with the raw amino-acid sequence, 525 residues long: Protein nucleotidyltransferase YdiU (525 aa).

Residues glycine 107, glycine 109, arginine 110, lysine 129, aspartate 141, glycine 142, arginine 192, and arginine 199 each contribute to the ATP site. The Proton acceptor role is filled by aspartate 268. Residues asparagine 269 and aspartate 278 each coordinate Mg(2+). Residue aspartate 278 coordinates ATP.

This sequence belongs to the SELO family. Requires Mg(2+) as cofactor. The cofactor is Mn(2+).

The catalysed reaction is L-seryl-[protein] + ATP = 3-O-(5'-adenylyl)-L-seryl-[protein] + diphosphate. The enzyme catalyses L-threonyl-[protein] + ATP = 3-O-(5'-adenylyl)-L-threonyl-[protein] + diphosphate. It catalyses the reaction L-tyrosyl-[protein] + ATP = O-(5'-adenylyl)-L-tyrosyl-[protein] + diphosphate. It carries out the reaction L-histidyl-[protein] + UTP = N(tele)-(5'-uridylyl)-L-histidyl-[protein] + diphosphate. The catalysed reaction is L-seryl-[protein] + UTP = O-(5'-uridylyl)-L-seryl-[protein] + diphosphate. The enzyme catalyses L-tyrosyl-[protein] + UTP = O-(5'-uridylyl)-L-tyrosyl-[protein] + diphosphate. Nucleotidyltransferase involved in the post-translational modification of proteins. It can catalyze the addition of adenosine monophosphate (AMP) or uridine monophosphate (UMP) to a protein, resulting in modifications known as AMPylation and UMPylation. The polypeptide is Protein nucleotidyltransferase YdiU (Ralstonia nicotianae (strain ATCC BAA-1114 / GMI1000) (Ralstonia solanacearum)).